The following is a 132-amino-acid chain: Profilin-1 (132 aa).

It belongs to the profilin family. In terms of assembly, occurs in many kinds of cells as a complex with monomeric actin in a 1:1 ratio. As to expression, expressed in the nerve ring during late embryonic stages. In adults, expression is seen in the neurons, vulva and somatic gonad.

Its subcellular location is the cytoplasm. The protein resides in the cytoskeleton. Binds to actin and affects the structure of the cytoskeleton. At high concentrations, profilin prevents the polymerization of actin, whereas it enhances it at low concentrations. By binding to PIP2, it inhibits the formation of IP3 and DG. Also binds to poly(L-proline) and phosphatidylinositol 4,5-bisphosphate micelles. This is Profilin-1 (pfn-1) from Caenorhabditis elegans.